Reading from the N-terminus, the 500-residue chain is NADH-quinone oxidoreductase subunit N (500 aa).

Transmembrane regions (helical) follow at residues 6 to 26 (SWIA…IALV), 40 to 60 (ALTL…ALGG), 69 to 89 (MVVV…ALMI), 106 to 125 (GGEF…VMIS), 129 to 151 (FLVL…ALRR), 164 to 184 (FVLG…LYGA), 207 to 227 (LVFG…AVPF), 239 to 259 (PTAV…AMTI), 276 to 296 (MLAL…VAQT), 302 to 322 (LAFS…AGVV), 337 to 357 (MFYA…ILLL), 380 to 400 (YAGV…LVGF), 417 to 437 (SYLV…FYYL), and 464 to 484 (IVLA…SSLM).

The protein belongs to the complex I subunit 2 family. NDH-1 is composed of 14 different subunits. Subunits NuoA, H, J, K, L, M, N constitute the membrane sector of the complex.

It is found in the cell inner membrane. It carries out the reaction a quinone + NADH + 5 H(+)(in) = a quinol + NAD(+) + 4 H(+)(out). In terms of biological role, NDH-1 shuttles electrons from NADH, via FMN and iron-sulfur (Fe-S) centers, to quinones in the respiratory chain. The immediate electron acceptor for the enzyme in this species is believed to be ubiquinone. Couples the redox reaction to proton translocation (for every two electrons transferred, four hydrogen ions are translocated across the cytoplasmic membrane), and thus conserves the redox energy in a proton gradient. This Polaromonas naphthalenivorans (strain CJ2) protein is NADH-quinone oxidoreductase subunit N.